The primary structure comprises 214 residues: ATP-dependent Clp protease proteolytic subunit (214 aa).

Ser-113 acts as the Nucleophile in catalysis. His-138 is an active-site residue.

This sequence belongs to the peptidase S14 family. In terms of assembly, fourteen ClpP subunits assemble into 2 heptameric rings which stack back to back to give a disk-like structure with a central cavity, resembling the structure of eukaryotic proteasomes.

The protein resides in the cytoplasm. It carries out the reaction Hydrolysis of proteins to small peptides in the presence of ATP and magnesium. alpha-casein is the usual test substrate. In the absence of ATP, only oligopeptides shorter than five residues are hydrolyzed (such as succinyl-Leu-Tyr-|-NHMec, and Leu-Tyr-Leu-|-Tyr-Trp, in which cleavage of the -Tyr-|-Leu- and -Tyr-|-Trp bonds also occurs).. Functionally, cleaves peptides in various proteins in a process that requires ATP hydrolysis. Has a chymotrypsin-like activity. Plays a major role in the degradation of misfolded proteins. This is ATP-dependent Clp protease proteolytic subunit from Teredinibacter turnerae (strain ATCC 39867 / T7901).